A 550-amino-acid chain; its full sequence is Methyl-coenzyme M reductase I subunit alpha (550 aa).

A coenzyme F430-binding site is contributed by glutamine 147. Residues arginine 225, 256-257 (KH), and arginine 270 each bind coenzyme B. Histidine 257 is modified (pros-methylhistidine). Arginine 271 is modified (5-methylarginine). Tyrosine 333 provides a ligand contact to coenzyme M. At glutamine 400 the chain carries 2-methylglutamine. Tyrosine 444 serves as a coordination point for coenzyme M. Glycine 445 carries the 1-thioglycine modification. Aspartate 450 is subject to (Z)-2,3-didehydroaspartate. At cysteine 452 the chain carries S-methylcysteine.

The protein belongs to the methyl-coenzyme M reductase alpha subunit family. MCR is a hexamer of two alpha, two beta, and two gamma chains, forming a dimer of heterotrimers. Coenzyme F430 serves as cofactor. In terms of processing, the alpha subunit contains six modified amino acids near the active site region. Is methylated on His-257, Arg-271, Gln-400 and Cys-452, probably by the action of specific S-adenosylmethionine-dependent methyltransferases. Also contains a thioglycine at position 445, forming a thiopeptide bond. Contains a didehydroaspartate residue at position 450. The methylation on C5 of Arg-271 is a post-translational methylation not essential in vivo, but which plays a role for the stability and structural integrity of MCR.

It is found in the cytoplasm. It catalyses the reaction coenzyme B + methyl-coenzyme M = methane + coenzyme M-coenzyme B heterodisulfide. It functions in the pathway one-carbon metabolism; methyl-coenzyme M reduction; methane from methyl-coenzyme M: step 1/1. Methyl-coenzyme M reductase activity is inhibited by 3-nitrooxypropanol (3-NOP) in vitro and in vivo, by oxidation of its active site Ni(I), which stops both growth and methanogenesis. Is also inhibited by the reaction product CoM-S-S-CoB. Functionally, component of the methyl-coenzyme M reductase (MCR) I that catalyzes the reductive cleavage of methyl-coenzyme M (CoM-S-CH3 or 2-(methylthio)ethanesulfonate) using coenzyme B (CoB or 7-mercaptoheptanoylthreonine phosphate) as reductant which results in the production of methane and the mixed heterodisulfide of CoB and CoM (CoM-S-S-CoB). This is the final step in methanogenesis. Neither N-6-mercaptohexanoylthreonine phosphate (H-S-HxoTP) nor N-8-mercaptooctanoylthreonine phosphate (H-SOcoTP) nor any other thiol compound such as CoA or CoM can substitute for CoB as the electron donor. This Methanothermobacter marburgensis (strain ATCC BAA-927 / DSM 2133 / JCM 14651 / NBRC 100331 / OCM 82 / Marburg) (Methanobacterium thermoautotrophicum) protein is Methyl-coenzyme M reductase I subunit alpha (mcrA).